Here is a 74-residue protein sequence, read N- to C-terminus: MDVRGPEAPGGRALRDAAENLFQELQEHFQALTATLNLRMEEMGNRIEDLQKNVKDLMVQAGIENSIKEQMLKT.

A coiled-coil region spans residues 12–65 (RALRDAAENLFQELQEHFQALTATLNLRMEEMGNRIEDLQKNVKDLMVQAGIEN).

The protein belongs to the HSBP1 family.

The protein is Heat shock factor-binding protein 1-like protein 1 (HSBP1L1) of Homo sapiens (Human).